The primary structure comprises 172 residues: ATP synthase subunit b (172 aa).

A helical transmembrane segment spans residues 5–24 (LLMLLLLGSVSLFANEAAAS).

This sequence belongs to the ATPase B chain family. In terms of assembly, F-type ATPases have 2 components, F(1) - the catalytic core - and F(0) - the membrane proton channel. F(1) has five subunits: alpha(3), beta(3), gamma(1), delta(1), epsilon(1). F(0) has three main subunits: a(1), b(2) and c(10-14). The alpha and beta chains form an alternating ring which encloses part of the gamma chain. F(1) is attached to F(0) by a central stalk formed by the gamma and epsilon chains, while a peripheral stalk is formed by the delta and b chains.

It localises to the cell inner membrane. F(1)F(0) ATP synthase produces ATP from ADP in the presence of a proton or sodium gradient. F-type ATPases consist of two structural domains, F(1) containing the extramembraneous catalytic core and F(0) containing the membrane proton channel, linked together by a central stalk and a peripheral stalk. During catalysis, ATP synthesis in the catalytic domain of F(1) is coupled via a rotary mechanism of the central stalk subunits to proton translocation. In terms of biological role, component of the F(0) channel, it forms part of the peripheral stalk, linking F(1) to F(0). This Nitratiruptor sp. (strain SB155-2) protein is ATP synthase subunit b.